We begin with the raw amino-acid sequence, 369 residues long: Type 2 DNA topoisomerase 6 subunit A (369 aa).

The 137-residue stretch at 10–146 (KPREIAKQKI…LGFIPEEDGS (137 aa)) folds into the Topo IIA-type catalytic domain. Residue tyrosine 103 is the O-(5'-phospho-DNA)-tyrosine intermediate of the active site. Mg(2+)-binding residues include glutamate 197 and aspartate 249.

Belongs to the TOP6A family. Homodimer. Heterotetramer of two Top6A and two Top6B chains. It depends on Mg(2+) as a cofactor.

The enzyme catalyses ATP-dependent breakage, passage and rejoining of double-stranded DNA.. Functionally, relaxes both positive and negative superturns and exhibits a strong decatenase activity. The protein is Type 2 DNA topoisomerase 6 subunit A of Methanocaldococcus jannaschii (strain ATCC 43067 / DSM 2661 / JAL-1 / JCM 10045 / NBRC 100440) (Methanococcus jannaschii).